The primary structure comprises 163 residues: Transcriptional repressor NrdR (163 aa).

Residues 3 to 34 (CPSCNSESSRVVDSRSIEMGVSIRRRRECSEC) fold into a zinc finger. Residues 46–136 (LLVVKRNGVT…VYKSFNCAED (91 aa)) enclose the ATP-cone domain.

Belongs to the NrdR family. Zn(2+) serves as cofactor.

In terms of biological role, negatively regulates transcription of bacterial ribonucleotide reductase nrd genes and operons by binding to NrdR-boxes. The sequence is that of Transcriptional repressor NrdR from Corynebacterium jeikeium (strain K411).